We begin with the raw amino-acid sequence, 469 residues long: Glutamate--tRNA ligase (469 aa).

Residues 11 to 21 (PSPTGFIHLGN) carry the 'HIGH' region motif. The short motif at 243–247 (KMSKR) is the 'KMSKS' region element. Lys-246 provides a ligand contact to ATP.

The protein belongs to the class-I aminoacyl-tRNA synthetase family. Glutamate--tRNA ligase type 1 subfamily. Monomer.

It localises to the cytoplasm. The catalysed reaction is tRNA(Glu) + L-glutamate + ATP = L-glutamyl-tRNA(Glu) + AMP + diphosphate. Its function is as follows. Catalyzes the attachment of glutamate to tRNA(Glu) in a two-step reaction: glutamate is first activated by ATP to form Glu-AMP and then transferred to the acceptor end of tRNA(Glu). The protein is Glutamate--tRNA ligase of Burkholderia cenocepacia (strain HI2424).